The following is a 263-amino-acid chain: Indolethylamine N-methyltransferase (263 aa).

Lysine 13 carries the post-translational modification N6-succinyllysine. S-adenosyl-L-methionine contacts are provided by residues tyrosine 20, tyrosine 25, 63 to 64 (GS), tyrosine 69, aspartate 85, and asparagine 90. N6-succinyllysine is present on lysine 96. S-adenosyl-L-methionine is bound by residues 142-143 (DA) and leucine 163.

The protein belongs to the class I-like SAM-binding methyltransferase superfamily. NNMT/PNMT/TEMT family. Monomer. In terms of tissue distribution, highly expressed in lung, also detected in liver and at very low levels in brain.

It localises to the cytoplasm. It catalyses the reaction a tertiary amine + S-adenosyl-L-methionine = a methylated tertiary amine + S-adenosyl-L-homocysteine + H(+). It carries out the reaction a secondary amine + S-adenosyl-L-methionine = a methylated secondary amine + S-adenosyl-L-homocysteine + H(+). The enzyme catalyses a primary amine + S-adenosyl-L-methionine = a methylated primary amine + S-adenosyl-L-homocysteine + H(+). The catalysed reaction is dimethyl sulfide + S-adenosyl-L-methionine = trimethylsulfonium + S-adenosyl-L-homocysteine. In terms of biological role, catalyzes the N-methylation of tryptamine and structurally related compounds. Functions as a thioether S-methyltransferase and is active with a variety of thioethers and the corresponding selenium and tellurium compounds, including 3-methylthiopropionaldehyde, dimethyl selenide, dimethyl telluride, 2-methylthioethylamine, 2-methylthioethanol, methyl-n-propyl sulfide and diethyl sulfide. Plays an important role in the detoxification of selenium compounds. In Oryctolagus cuniculus (Rabbit), this protein is Indolethylamine N-methyltransferase (INMT).